The sequence spans 177 residues: Large ribosomal subunit protein uL6 (177 aa).

Belongs to the universal ribosomal protein uL6 family. As to quaternary structure, part of the 50S ribosomal subunit.

This protein binds to the 23S rRNA, and is important in its secondary structure. It is located near the subunit interface in the base of the L7/L12 stalk, and near the tRNA binding site of the peptidyltransferase center. This is Large ribosomal subunit protein uL6 from Rhodopseudomonas palustris (strain HaA2).